We begin with the raw amino-acid sequence, 408 residues long: Putative FBD-associated F-box protein At5g50270 (408 aa).

Positions 1–54 constitute an F-box domain; the sequence is MDRISGLPDELLLRVLSLLPNVKDVVVTMVLSKRWQFLWMMVPKLVYDDSYQNL. The region spanning 345–408 is the FBD domain; that stretch reads PLRDDLSSVP…VNPDKKYEMI (64 aa).

This chain is Putative FBD-associated F-box protein At5g50270, found in Arabidopsis thaliana (Mouse-ear cress).